The sequence spans 911 residues: DNA ligase 4 (911 aa).

Positions 271, 272, 273, 274, 278, 331, 345, 367, 427, 432, 449, and 451 each coordinate ATP. The active-site N6-AMP-lysine intermediate is the K273. E331 is a binding site for Mg(2+). Residue E427 coordinates Mg(2+). Residues 610–620 (LASKHFYVGGD) form a required for catalytic activity region. 2 consecutive BRCT domains span residues 654-743 (KISN…PHFM) and 808-911 (SPLS…QYLI).

This sequence belongs to the ATP-dependent DNA ligase family. As to quaternary structure, interacts with XRCC4; the LIG4-XRCC4 subcomplex has a 1:2 stoichiometry and XRCC4 is required for LIG4 stability. Component of the core long-range non-homologous end joining (NHEJ) complex (also named DNA-PK complex) composed of PRKDC, LIG4, XRCC4, XRCC6/Ku70, XRCC5/Ku86 and NHEJ1/XLF. Additional component of the NHEJ complex includes PAXX. Following autophosphorylation, PRKDC dissociates from DNA, leading to formation of the short-range NHEJ complex, composed of LIG4, XRCC4, XRCC6/Ku70, XRCC5/Ku86 and NHEJ1/XLF. Interacts with DCLRE1C; the interaction is direct. Interacts with APLF. The cofactor is Mg(2+).

It is found in the nucleus. The enzyme catalyses ATP + (deoxyribonucleotide)n-3'-hydroxyl + 5'-phospho-(deoxyribonucleotide)m = (deoxyribonucleotide)n+m + AMP + diphosphate.. DNA ligase involved in DNA non-homologous end joining (NHEJ); required for double-strand break (DSB) repair and V(D)J recombination. Catalyzes the NHEJ ligation step of the broken DNA during DSB repair by resealing the DNA breaks after the gap filling is completed. Joins single-strand breaks in a double-stranded polydeoxynucleotide in an ATP-dependent reaction. LIG4 is mechanistically flexible: it can ligate nicks as well as compatible DNA overhangs alone, while in the presence of XRCC4, it can ligate ends with 2-nucleotides (nt) microhomology and 1-nt gaps. Forms a subcomplex with XRCC4; the LIG4-XRCC4 subcomplex is responsible for the NHEJ ligation step and XRCC4 enhances the joining activity of LIG4. Binding of the LIG4-XRCC4 complex to DNA ends is dependent on the assembly of the DNA-dependent protein kinase complex DNA-PK to these DNA ends. LIG4 regulates nuclear localization of XRCC4. The protein is DNA ligase 4 of Pongo abelii (Sumatran orangutan).